The sequence spans 73 residues: Conotoxin Cl14.8 (73 aa).

The N-terminal stretch at 1–19 (MKLSVTFIALMLTMTLTQG) is a signal peptide. Positions 20–47 (FVLQAIDGRDNSGLDDLSEADSMEHQLQ) are excised as a propeptide.

Belongs to the conotoxin L superfamily. Post-translationally, contains 2 disulfide bonds. As to expression, expressed by the venom duct.

Its subcellular location is the secreted. This is Conotoxin Cl14.8 from Californiconus californicus (California cone).